Here is a 636-residue protein sequence, read N- to C-terminus: Threonine--tRNA ligase (636 aa).

Residues 1–63 (MSSISIALPD…KDDSRVEIIT (63 aa)) enclose the TGS domain. The segment at 243–534 (DHRRLGRELD…LIEHYAGNFP (292 aa)) is catalytic. Positions 335, 386, and 511 each coordinate Zn(2+).

The protein belongs to the class-II aminoacyl-tRNA synthetase family. In terms of assembly, homodimer. Requires Zn(2+) as cofactor.

The protein localises to the cytoplasm. The enzyme catalyses tRNA(Thr) + L-threonine + ATP = L-threonyl-tRNA(Thr) + AMP + diphosphate + H(+). Functionally, catalyzes the attachment of threonine to tRNA(Thr) in a two-step reaction: L-threonine is first activated by ATP to form Thr-AMP and then transferred to the acceptor end of tRNA(Thr). Also edits incorrectly charged L-seryl-tRNA(Thr). The chain is Threonine--tRNA ligase from Pelobacter propionicus (strain DSM 2379 / NBRC 103807 / OttBd1).